A 120-amino-acid chain; its full sequence is Chaperonin GroEL (120 aa).

23–27 (DGTTT) serves as a coordination point for ATP.

The protein belongs to the chaperonin (HSP60) family. In terms of assembly, forms a cylinder of 14 subunits composed of two heptameric rings stacked back-to-back. Interacts with the co-chaperonin GroES.

The protein resides in the cytoplasm. It catalyses the reaction ATP + H2O + a folded polypeptide = ADP + phosphate + an unfolded polypeptide.. Its function is as follows. Together with its co-chaperonin GroES, plays an essential role in assisting protein folding. The GroEL-GroES system forms a nano-cage that allows encapsulation of the non-native substrate proteins and provides a physical environment optimized to promote and accelerate protein folding. This chain is Chaperonin GroEL, found in Mycolicibacterium vaccae (Mycobacterium vaccae).